Reading from the N-terminus, the 520-residue chain is GMP synthase [glutamine-hydrolyzing] (520 aa).

The Glutamine amidotransferase type-1 domain occupies 9–202; that stretch reads TILIIDFGSQ…VHRIVGVKPG (194 aa). Catalysis depends on Cys-86, which acts as the Nucleophile. Residues His-176 and Glu-178 contribute to the active site. The GMPS ATP-PPase domain occupies 203–395; that stretch reads WTMGAYREQA…LGLPDSFIGR (193 aa). 230-236 is an ATP binding site; it reads SGGVDSS.

In terms of assembly, homodimer.

The enzyme catalyses XMP + L-glutamine + ATP + H2O = GMP + L-glutamate + AMP + diphosphate + 2 H(+). It functions in the pathway purine metabolism; GMP biosynthesis; GMP from XMP (L-Gln route): step 1/1. Functionally, catalyzes the synthesis of GMP from XMP. The polypeptide is GMP synthase [glutamine-hydrolyzing] (Brucella melitensis biotype 2 (strain ATCC 23457)).